The chain runs to 310 residues: Protein N-terminal asparagine amidohydrolase (310 aa).

In terms of assembly, monomer.

Its subcellular location is the cytoplasm. The catalysed reaction is N-terminal L-asparaginyl-[protein] + H2O + H(+) = N-terminal L-aspartyl-[protein] + NH4(+). In terms of biological role, N-terminal asparagine deamidase that mediates deamidation of N-terminal asparagine residues to aspartate. Required for the ubiquitin-dependent turnover of intracellular proteins that initiate with Met-Asn. These proteins are acetylated on the retained initiator methionine and can subsequently be modified by the removal of N-acetyl methionine by acylaminoacid hydrolase (AAH). Conversion of the resulting N-terminal asparagine to aspartate by NTAN1/PNAD renders the protein susceptible to arginylation, polyubiquitination and degradation as specified by the N-end rule. This enzyme does not act on substrates with internal or C-terminal asparagines and does not act on glutamine residues in any position. This chain is Protein N-terminal asparagine amidohydrolase, found in Mus musculus (Mouse).